Reading from the N-terminus, the 339-residue chain is 4-hydroxythreonine-4-phosphate dehydrogenase (339 aa).

Positions 141 and 142 each coordinate substrate. Positions 171, 215, and 270 each coordinate a divalent metal cation. Residues Lys-278, Asn-287, and Arg-296 each contribute to the substrate site.

Belongs to the PdxA family. Homodimer. Zn(2+) serves as cofactor. The cofactor is Mg(2+). It depends on Co(2+) as a cofactor.

It is found in the cytoplasm. It carries out the reaction 4-(phosphooxy)-L-threonine + NAD(+) = 3-amino-2-oxopropyl phosphate + CO2 + NADH. It participates in cofactor biosynthesis; pyridoxine 5'-phosphate biosynthesis; pyridoxine 5'-phosphate from D-erythrose 4-phosphate: step 4/5. In terms of biological role, catalyzes the NAD(P)-dependent oxidation of 4-(phosphooxy)-L-threonine (HTP) into 2-amino-3-oxo-4-(phosphooxy)butyric acid which spontaneously decarboxylates to form 3-amino-2-oxopropyl phosphate (AHAP). The protein is 4-hydroxythreonine-4-phosphate dehydrogenase of Geobacter metallireducens (strain ATCC 53774 / DSM 7210 / GS-15).